A 198-amino-acid chain; its full sequence is HTH-type transcriptional regulator BetI (198 aa).

The HTH tetR-type domain maps to 8-68 (PLRRRELIDA…ATMRHLLREL (61 aa)). Positions 31–50 (TVAQIAHEAGVSPALAHHYF) form a DNA-binding region, H-T-H motif.

It functions in the pathway amine and polyamine biosynthesis; betaine biosynthesis via choline pathway [regulation]. Its function is as follows. Repressor involved in the biosynthesis of the osmoprotectant glycine betaine. It represses transcription of the choline transporter BetT and the genes of BetAB involved in the synthesis of glycine betaine. This chain is HTH-type transcriptional regulator BetI, found in Brucella abortus (strain 2308).